A 288-amino-acid chain; its full sequence is Bifunctional protein FolD 2 (288 aa).

Residues 166–168 (GRS) and Ser-191 each bind NADP(+).

The protein belongs to the tetrahydrofolate dehydrogenase/cyclohydrolase family. As to quaternary structure, homodimer.

The enzyme catalyses (6R)-5,10-methylene-5,6,7,8-tetrahydrofolate + NADP(+) = (6R)-5,10-methenyltetrahydrofolate + NADPH. The catalysed reaction is (6R)-5,10-methenyltetrahydrofolate + H2O = (6R)-10-formyltetrahydrofolate + H(+). It participates in one-carbon metabolism; tetrahydrofolate interconversion. Catalyzes the oxidation of 5,10-methylenetetrahydrofolate to 5,10-methenyltetrahydrofolate and then the hydrolysis of 5,10-methenyltetrahydrofolate to 10-formyltetrahydrofolate. This Myxococcus xanthus (strain DK1622) protein is Bifunctional protein FolD 2.